A 139-amino-acid polypeptide reads, in one-letter code: Class I hydrophobin 1 (139 aa).

The signal sequence occupies residues 1 to 21; that stretch reads MFFRISTVFVVALAAFAAASP. Disulfide bonds link Cys57/Cys118, Cys64/Cys112, Cys65/Cys98, and Cys119/Cys132.

It belongs to the fungal hydrophobin family. Self-assembles to form functional amyloid fibrils called rodlets. Self-assembly into fibrillar rodlets occurs spontaneously at hydrophobic:hydrophilic interfaces and the rodlets further associate laterally to form amphipathic monolayers.

It localises to the secreted. Its subcellular location is the cell wall. Aerial growth, conidiation, and dispersal of filamentous fungi in the environment rely upon a capability of their secreting small amphipathic proteins called hydrophobins (HPBs) with low sequence identity. Class I can self-assemble into an outermost layer of rodlet bundles on aerial cell surfaces, conferring cellular hydrophobicity that supports fungal growth, development and dispersal; whereas Class II form highly ordered films at water-air interfaces through intermolecular interactions but contribute nothing to the rodlet structure. Hah1 is a class I hydrophobin that is involved in aerial growth of mycelia, but does not play a role in pathogenesis. The sequence is that of Class I hydrophobin 1 from Heterobasidion annosum (Root rot fungus).